Consider the following 263-residue polypeptide: N-acyl homoserine lactonase AttM (263 aa).

Positions 103, 105, 107, 108, 180, 202, and 247 each coordinate Zn(2+).

The protein belongs to the metallo-beta-lactamase superfamily. Requires Zn(2+) as cofactor.

It catalyses the reaction an N-acyl-L-homoserine lactone + H2O = an N-acyl-L-homoserine + H(+). The polypeptide is N-acyl homoserine lactonase AttM (attM) (Rhizobium radiobacter (Agrobacterium tumefaciens)).